The sequence spans 310 residues: UPF0282 protein PF0593 (310 aa).

This sequence belongs to the UPF0282 family.

The chain is UPF0282 protein PF0593 from Pyrococcus furiosus (strain ATCC 43587 / DSM 3638 / JCM 8422 / Vc1).